Reading from the N-terminus, the 525-residue chain is Peptide chain release factor 3 (525 aa).

The region spanning 9–276 is the tr-type G domain; sequence AKRRTFAIIS…GFTRYAPAPQ (268 aa). Residues 18 to 25, 86 to 90, and 140 to 143 each bind GTP; these read SHPDAGKT, DTPGH, and NKFD.

This sequence belongs to the TRAFAC class translation factor GTPase superfamily. Classic translation factor GTPase family. PrfC subfamily.

The protein resides in the cytoplasm. Increases the formation of ribosomal termination complexes and stimulates activities of RF-1 and RF-2. It binds guanine nucleotides and has strong preference for UGA stop codons. It may interact directly with the ribosome. The stimulation of RF-1 and RF-2 is significantly reduced by GTP and GDP, but not by GMP. The sequence is that of Peptide chain release factor 3 from Francisella tularensis subsp. mediasiatica (strain FSC147).